Consider the following 238-residue polypeptide: Probable transcriptional regulatory protein Mmwyl1_2868 (238 aa).

The protein belongs to the TACO1 family.

Its subcellular location is the cytoplasm. The polypeptide is Probable transcriptional regulatory protein Mmwyl1_2868 (Marinomonas sp. (strain MWYL1)).